A 521-amino-acid polypeptide reads, in one-letter code: Anthranilate synthase component 1 (521 aa).

L-tryptophan-binding positions include Thr-40 and 292 to 294 (PYM). 329-330 (GT) lines the chorismate pocket. Glu-362 lines the Mg(2+) pocket. Residues Tyr-450, Arg-470, 484-486 (GAG), and Gly-486 contribute to the chorismate site. Glu-499 contacts Mg(2+).

The protein belongs to the anthranilate synthase component I family. Heterotetramer consisting of two non-identical subunits: a beta subunit (TrpG) and a large alpha subunit (TrpE). Requires Mg(2+) as cofactor.

It carries out the reaction chorismate + L-glutamine = anthranilate + pyruvate + L-glutamate + H(+). The protein operates within amino-acid biosynthesis; L-tryptophan biosynthesis; L-tryptophan from chorismate: step 1/5. Its activity is regulated as follows. Feedback inhibited by tryptophan. Its function is as follows. Part of a heterotetrameric complex that catalyzes the two-step biosynthesis of anthranilate, an intermediate in the biosynthesis of L-tryptophan. In the first step, the glutamine-binding beta subunit (TrpG) of anthranilate synthase (AS) provides the glutamine amidotransferase activity which generates ammonia as a substrate that, along with chorismate, is used in the second step, catalyzed by the large alpha subunit of AS (TrpE) to produce anthranilate. In the absence of TrpG, TrpE can synthesize anthranilate directly from chorismate and high concentrations of ammonia. This chain is Anthranilate synthase component 1 (trpE), found in Buchnera aphidicola subsp. Acyrthosiphon pisum (strain APS) (Acyrthosiphon pisum symbiotic bacterium).